Here is a 257-residue protein sequence, read N- to C-terminus: Ubiquinone biosynthesis O-methyltransferase (257 aa).

Residues arginine 43, glycine 77, aspartate 98, and methionine 144 each coordinate S-adenosyl-L-methionine.

This sequence belongs to the methyltransferase superfamily. UbiG/COQ3 family.

The catalysed reaction is a 3-demethylubiquinol + S-adenosyl-L-methionine = a ubiquinol + S-adenosyl-L-homocysteine + H(+). The enzyme catalyses a 3-(all-trans-polyprenyl)benzene-1,2-diol + S-adenosyl-L-methionine = a 2-methoxy-6-(all-trans-polyprenyl)phenol + S-adenosyl-L-homocysteine + H(+). Its pathway is cofactor biosynthesis; ubiquinone biosynthesis. Its function is as follows. O-methyltransferase that catalyzes the 2 O-methylation steps in the ubiquinone biosynthetic pathway. This chain is Ubiquinone biosynthesis O-methyltransferase, found in Psychrobacter arcticus (strain DSM 17307 / VKM B-2377 / 273-4).